Reading from the N-terminus, the 528-residue chain is Peptide chain release factor 3 (528 aa).

A tr-type G domain is found at 9-280 (RRRRTFAIIS…LKLAPAPAPR (272 aa)). Residues 18 to 25 (SHPDAGKT), 86 to 90 (DTPGH), and 140 to 143 (NKLD) each bind GTP.

Belongs to the TRAFAC class translation factor GTPase superfamily. Classic translation factor GTPase family. PrfC subfamily.

It localises to the cytoplasm. Its function is as follows. Increases the formation of ribosomal termination complexes and stimulates activities of RF-1 and RF-2. It binds guanine nucleotides and has strong preference for UGA stop codons. It may interact directly with the ribosome. The stimulation of RF-1 and RF-2 is significantly reduced by GTP and GDP, but not by GMP. In Symbiobacterium thermophilum (strain DSM 24528 / JCM 14929 / IAM 14863 / T), this protein is Peptide chain release factor 3.